A 65-amino-acid chain; its full sequence is MISTSSILILVFLLACFMATSAQWGYGGYGRGYGGYGGYGRGMYGGYGRGMYGGYGRGMYGGWGK.

A signal peptide spans 1–22; sequence MISTSSILILVFLLACFMATSA. Tyrosine amide is present on residues Tyr29, Tyr39, Tyr47, and Tyr55. At Trp63 the chain carries Tryptophan amide.

It belongs to the YARP (YGGW-amide related peptide) family.

The protein localises to the secreted. Its function is as follows. May have antimicrobial activity. This chain is Neuropeptide-like protein 28 (nlp-28), found in Caenorhabditis elegans.